The chain runs to 89 residues: Small ribosomal subunit protein uS15 (89 aa).

The protein belongs to the universal ribosomal protein uS15 family. As to quaternary structure, part of the 30S ribosomal subunit. Forms a bridge to the 50S subunit in the 70S ribosome, contacting the 23S rRNA.

Its function is as follows. One of the primary rRNA binding proteins, it binds directly to 16S rRNA where it helps nucleate assembly of the platform of the 30S subunit by binding and bridging several RNA helices of the 16S rRNA. Forms an intersubunit bridge (bridge B4) with the 23S rRNA of the 50S subunit in the ribosome. The sequence is that of Small ribosomal subunit protein uS15 from Bifidobacterium longum (strain DJO10A).